The chain runs to 379 residues: Transcription termination factor Rho (379 aa).

Residues 1 to 68 (MTDKYGFLRS…KRIFQINGRF (68 aa)) form the Rho RNA-BD domain. Residues 111–116 (GKGQRG), 123–128 (KTGKTT), and R154 contribute to the ATP site.

It belongs to the Rho family. In terms of assembly, homohexamer. The homohexamer assembles into an open ring structure.

Facilitates transcription termination by a mechanism that involves Rho binding to the nascent RNA, activation of Rho's RNA-dependent ATPase activity, and release of the mRNA from the DNA template. The protein is Transcription termination factor Rho of Karelsulcia muelleri (strain SMDSEM) (Sulcia muelleri).